We begin with the raw amino-acid sequence, 289 residues long: UPF0173 metal-dependent hydrolase H16_A2129 (289 aa).

This sequence belongs to the UPF0173 family.

This chain is UPF0173 metal-dependent hydrolase H16_A2129, found in Cupriavidus necator (strain ATCC 17699 / DSM 428 / KCTC 22496 / NCIMB 10442 / H16 / Stanier 337) (Ralstonia eutropha).